We begin with the raw amino-acid sequence, 139 residues long: Large-conductance mechanosensitive channel (139 aa).

The next 3 helical transmembrane spans lie at 14-34 (VVDL…VNSA), 38-58 (IFMP…YYIP), and 82-102 (GQFL…FLVI).

It belongs to the MscL family. As to quaternary structure, homopentamer.

The protein localises to the cell inner membrane. Channel that opens in response to stretch forces in the membrane lipid bilayer. May participate in the regulation of osmotic pressure changes within the cell. This chain is Large-conductance mechanosensitive channel, found in Methylobacterium radiotolerans (strain ATCC 27329 / DSM 1819 / JCM 2831 / NBRC 15690 / NCIMB 10815 / 0-1).